The sequence spans 1298 residues: Ras guanine nucleotide exchange factor Q (1298 aa).

Disordered regions lie at residues 1–26 (MDIN…INNF), 46–88 (NNNI…SIEG), 211–271 (NISN…GPLK), 314–384 (YTPP…QQQQ), and 459–533 (LSNG…STTT). Low complexity-rich tracts occupy residues 211–245 (NISN…NSNN) and 315–384 (TPPS…QQQQ). Residues 352–389 (SSLNANNNTNNNNQQLQQQQQQQQQQQLQQQQQLTKSY) are a coiled coil. Positions 473–482 (LHLSTESTTS) are enriched in polar residues. Low complexity-rich tracts occupy residues 483–501 (NNNN…NNNN) and 508–533 (TTNS…STTT). Residues 550-689 (DKDEVIAGER…YLKKAINDSG (140 aa)) form the N-terminal Ras-GEF domain. The DEP domain maps to 723-801 (MSQSLQLKER…SSSSTTTTTT (79 aa)). Disordered regions lie at residues 781-864 (SKSG…PNSI) and 884-920 (GIAN…SNSF). Positions 783 to 864 (SGSSFSPSSS…ITSTSLPNSI (82 aa)) are enriched in low complexity. Residues 964 to 1193 (HPVEIARQLT…YKASHMIEQP (230 aa)) form the Ras-GEF domain. Residues 1214-1267 (TTTTTNNLNNNNNNNNPNNNNNNNNNSANNKSSPSPSPSSSPITSSPISSLTIN) are disordered.

Promotes the exchange of Ras-bound GDP by GTP. Seems to play a role in chemotaxis. In Dictyostelium discoideum (Social amoeba), this protein is Ras guanine nucleotide exchange factor Q (gefQ).